The following is a 126-amino-acid chain: Ribosome-binding factor A (126 aa).

The protein belongs to the RbfA family. In terms of assembly, monomer. Binds 30S ribosomal subunits, but not 50S ribosomal subunits or 70S ribosomes.

The protein resides in the cytoplasm. One of several proteins that assist in the late maturation steps of the functional core of the 30S ribosomal subunit. Associates with free 30S ribosomal subunits (but not with 30S subunits that are part of 70S ribosomes or polysomes). Required for efficient processing of 16S rRNA. May interact with the 5'-terminal helix region of 16S rRNA. The chain is Ribosome-binding factor A from Clostridioides difficile (strain 630) (Peptoclostridium difficile).